The following is a 379-amino-acid chain: Flagellin A (379 aa).

Coiled-coil stretches lie at residues 103–128 (TNSA…RIAE) and 302–341 (YVDS…IKDT).

The protein belongs to the bacterial flagellin family. Heteromer of multiple flagellin subunits including FlaA, FlaB, FlaC, FlaD and possibly FlaE.

It localises to the secreted. Its subcellular location is the bacterial flagellum. Its function is as follows. Flagellin is the subunit protein which polymerizes to form the filaments of bacterial flagella. FlaA is essential for flagellar synthesis and full motility. Important for virulence at two different levels: is needed for crossing the fish integument and may play a role once the bacterium has entered the host. The chain is Flagellin A (flaA) from Vibrio anguillarum (Listonella anguillarum).